The primary structure comprises 128 residues: KRAB domain-containing protein 1 (128 aa).

The KRAB domain occupies 15–86; it reads VAFEDVAVYF…QPQGVLSRND (72 aa).

This chain is KRAB domain-containing protein 1 (KRBOX1), found in Homo sapiens (Human).